Here is a 383-residue protein sequence, read N- to C-terminus: MSDPLALAQALLRCPSVTPLDAGAQSVLAEALTAQGFTVTQLPFGDIANFYAKRVGPRSGPHLCFAGHTDVVPPGDAPWSVDAFAGEVHDGVLIGRGACDMKGAIASFVAACAARPDHPGTISLLITGDEEGVATDGTVRVLDWMRQAGEIPDFCVVGEPTNPGRLGEVIKIGRRGSLNATLTVRGRQGHVAYPHRADNPLPRLVAALHALTTTRLDDGMEGFEPSSLQLTTVDVGNPATNVIPEQAQARLNIRFNPLHRGDDLARWLRGIVQDHAPDAVIDIAISGEAFVTDPDRDPRPGASHGIAALRMAIQRITGLSPRLDTGGGTSDARFITHLCPVVEFGLVGATMHQRDEAVAVRDLQDLTGIYEALLDFYLGKDSA.

His68 is a Zn(2+) binding site. The active site involves Asp70. Position 100 (Asp100) interacts with Zn(2+). Glu130 acts as the Proton acceptor in catalysis. Glu131, Glu159, and His352 together coordinate Zn(2+).

The protein belongs to the peptidase M20A family. DapE subfamily. Homodimer. Zn(2+) is required as a cofactor. It depends on Co(2+) as a cofactor.

The enzyme catalyses N-succinyl-(2S,6S)-2,6-diaminopimelate + H2O = (2S,6S)-2,6-diaminopimelate + succinate. It functions in the pathway amino-acid biosynthesis; L-lysine biosynthesis via DAP pathway; LL-2,6-diaminopimelate from (S)-tetrahydrodipicolinate (succinylase route): step 3/3. Catalyzes the hydrolysis of N-succinyl-L,L-diaminopimelic acid (SDAP), forming succinate and LL-2,6-diaminopimelate (DAP), an intermediate involved in the bacterial biosynthesis of lysine and meso-diaminopimelic acid, an essential component of bacterial cell walls. This is Succinyl-diaminopimelate desuccinylase from Granulibacter bethesdensis (strain ATCC BAA-1260 / CGDNIH1).